We begin with the raw amino-acid sequence, 256 residues long: uncharacterized protein (256 aa).

An N-terminal signal peptide occupies residues 1-22 (MGYLKRIGMCISLLIVIIFVTS). Cys23 carries N-palmitoyl cysteine lipidation. Cys23 carries S-diacylglycerol cysteine lipidation.

Belongs to the staphylococcal tandem lipoprotein family.

It is found in the cell membrane. This is an uncharacterized protein from Staphylococcus aureus (strain MRSA252).